Reading from the N-terminus, the 220-residue chain is ATP-dependent Clp protease proteolytic subunit (220 aa).

Ser125 functions as the Nucleophile in the catalytic mechanism. His150 is a catalytic residue.

The protein belongs to the peptidase S14 family. As to quaternary structure, fourteen ClpP subunits assemble into 2 heptameric rings which stack back to back to give a disk-like structure with a central cavity, resembling the structure of eukaryotic proteasomes.

It is found in the cytoplasm. It catalyses the reaction Hydrolysis of proteins to small peptides in the presence of ATP and magnesium. alpha-casein is the usual test substrate. In the absence of ATP, only oligopeptides shorter than five residues are hydrolyzed (such as succinyl-Leu-Tyr-|-NHMec, and Leu-Tyr-Leu-|-Tyr-Trp, in which cleavage of the -Tyr-|-Leu- and -Tyr-|-Trp bonds also occurs).. In terms of biological role, cleaves peptides in various proteins in a process that requires ATP hydrolysis. Has a chymotrypsin-like activity. Plays a major role in the degradation of misfolded proteins. The protein is ATP-dependent Clp protease proteolytic subunit of Bacteroides fragilis (strain YCH46).